The sequence spans 235 residues: Transmembrane protein 215 (235 aa).

2 consecutive transmembrane segments (helical) span residues 12–32 and 40–60; these read LVVA…VSGM and IPLL…IALA. Residues 99–145 form a disordered region; the sequence is SDLESGKGSSDELAKKAGLRGKPPPQSQGEVSVASSINSPTPTEEGE. A compositionally biased stretch (polar residues) spans 125-140; it reads SQGEVSVASSINSPTP.

The protein localises to the membrane. This chain is Transmembrane protein 215 (TMEM215), found in Homo sapiens (Human).